Reading from the N-terminus, the 441-residue chain is Ribosomal protein uS12 methylthiotransferase RimO (441 aa).

Residues 8–118 (PKIGFVSLGC…VLEHVHHYTP (111 aa)) form the MTTase N-terminal domain. Residues Cys17, Cys53, Cys82, Cys150, Cys154, and Cys157 each coordinate [4Fe-4S] cluster. A Radical SAM core domain is found at 136 to 373 (LTPRHYAYLK…MQLQQQISAE (238 aa)). The TRAM domain occupies 376 to 441 (QEKVGREILV…DEYDLWGTRV (66 aa)).

Belongs to the methylthiotransferase family. RimO subfamily. [4Fe-4S] cluster serves as cofactor.

It localises to the cytoplasm. The enzyme catalyses L-aspartate(89)-[ribosomal protein uS12]-hydrogen + (sulfur carrier)-SH + AH2 + 2 S-adenosyl-L-methionine = 3-methylsulfanyl-L-aspartate(89)-[ribosomal protein uS12]-hydrogen + (sulfur carrier)-H + 5'-deoxyadenosine + L-methionine + A + S-adenosyl-L-homocysteine + 2 H(+). Catalyzes the methylthiolation of an aspartic acid residue of ribosomal protein uS12. In Klebsiella pneumoniae subsp. pneumoniae (strain ATCC 700721 / MGH 78578), this protein is Ribosomal protein uS12 methylthiotransferase RimO.